The sequence spans 282 residues: 2-dehydro-3-deoxyphosphooctonate aldolase (282 aa).

It belongs to the KdsA family.

Its subcellular location is the cytoplasm. It carries out the reaction D-arabinose 5-phosphate + phosphoenolpyruvate + H2O = 3-deoxy-alpha-D-manno-2-octulosonate-8-phosphate + phosphate. Its pathway is carbohydrate biosynthesis; 3-deoxy-D-manno-octulosonate biosynthesis; 3-deoxy-D-manno-octulosonate from D-ribulose 5-phosphate: step 2/3. It functions in the pathway bacterial outer membrane biogenesis; lipopolysaccharide biosynthesis. This chain is 2-dehydro-3-deoxyphosphooctonate aldolase, found in Shewanella sp. (strain MR-4).